The chain runs to 142 residues: Hemoglobin subunit alpha (142 aa).

S1 carries the post-translational modification N-acetylserine. In terms of domain architecture, Globin spans 1–142; that stretch reads SLSEKNKAAV…VALALADRYR (142 aa). H59 lines the O2 pocket. Residue H88 coordinates heme b.

The protein belongs to the globin family. Heterotetramer of two alpha chains and two beta chains. Red blood cells.

Functionally, involved in oxygen transport from gills to the various peripheral tissues. The sequence is that of Hemoglobin subunit alpha (hba) from Pagothenia borchgrevinki (Bald rockcod).